The chain runs to 158 residues: Transcription elongation factor GreA (158 aa).

Residues L14 to K76 are a coiled coil.

It belongs to the GreA/GreB family.

Functionally, necessary for efficient RNA polymerase transcription elongation past template-encoded arresting sites. The arresting sites in DNA have the property of trapping a certain fraction of elongating RNA polymerases that pass through, resulting in locked ternary complexes. Cleavage of the nascent transcript by cleavage factors such as GreA or GreB allows the resumption of elongation from the new 3'terminus. GreA releases sequences of 2 to 3 nucleotides. This is Transcription elongation factor GreA from Acholeplasma laidlawii (strain PG-8A).